We begin with the raw amino-acid sequence, 349 residues long: Holliday junction branch migration complex subunit RuvB (349 aa).

Over residues 1–15 (MSDDYRETDPTRQPE) the composition is skewed to basic and acidic residues. The tract at residues 1-25 (MSDDYRETDPTRQPEDMGEGSLRPE) is disordered. The interval 1–183 (MSDDYRETDP…FGIPLRLVFY (183 aa)) is large ATPase domain (RuvB-L). Residues Leu-22, Arg-23, Gly-64, Lys-67, Thr-68, Thr-69, 130 to 132 (EDF), Arg-173, Tyr-183, and Arg-220 each bind ATP. A Mg(2+)-binding site is contributed by Thr-68. Residues 184 to 254 (TPEELRAIVS…LADAALGRLE (71 aa)) are small ATPAse domain (RuvB-S). The interval 257–349 (ERGLDAMDRR…SSLEQDDSAP (93 aa)) is head domain (RuvB-H). Residues Arg-293, Arg-312, and Arg-317 each contribute to the DNA site.

The protein belongs to the RuvB family. In terms of assembly, homohexamer. Forms an RuvA(8)-RuvB(12)-Holliday junction (HJ) complex. HJ DNA is sandwiched between 2 RuvA tetramers; dsDNA enters through RuvA and exits via RuvB. An RuvB hexamer assembles on each DNA strand where it exits the tetramer. Each RuvB hexamer is contacted by two RuvA subunits (via domain III) on 2 adjacent RuvB subunits; this complex drives branch migration. In the full resolvosome a probable DNA-RuvA(4)-RuvB(12)-RuvC(2) complex forms which resolves the HJ.

The protein resides in the cytoplasm. The enzyme catalyses ATP + H2O = ADP + phosphate + H(+). The RuvA-RuvB-RuvC complex processes Holliday junction (HJ) DNA during genetic recombination and DNA repair, while the RuvA-RuvB complex plays an important role in the rescue of blocked DNA replication forks via replication fork reversal (RFR). RuvA specifically binds to HJ cruciform DNA, conferring on it an open structure. The RuvB hexamer acts as an ATP-dependent pump, pulling dsDNA into and through the RuvAB complex. RuvB forms 2 homohexamers on either side of HJ DNA bound by 1 or 2 RuvA tetramers; 4 subunits per hexamer contact DNA at a time. Coordinated motions by a converter formed by DNA-disengaged RuvB subunits stimulates ATP hydrolysis and nucleotide exchange. Immobilization of the converter enables RuvB to convert the ATP-contained energy into a lever motion, pulling 2 nucleotides of DNA out of the RuvA tetramer per ATP hydrolyzed, thus driving DNA branch migration. The RuvB motors rotate together with the DNA substrate, which together with the progressing nucleotide cycle form the mechanistic basis for DNA recombination by continuous HJ branch migration. Branch migration allows RuvC to scan DNA until it finds its consensus sequence, where it cleaves and resolves cruciform DNA. This is Holliday junction branch migration complex subunit RuvB from Gluconobacter oxydans (strain 621H) (Gluconobacter suboxydans).